The sequence spans 663 residues: Heparan-alpha-glucosaminide N-acetyltransferase (663 aa).

The disordered stretch occupies residues 1–24 (MTGARASAAEQRRAGRSGQARAAE). Topologically, residues 1–190 (MTGARASAAE…LAVNEDPVDS (190 aa)) are lumenal, vesicle. N-linked (GlcNAc...) asparagine glycosylation is found at Asn-94, Asn-142, and Asn-162. Cys-151 and Cys-462 are disulfide-bonded. A helical transmembrane segment spans residues 191–211 (NLPVSIAFLIGLAVIIVISFL). The Cytoplasmic segment spans residues 212–275 (RLLLSLDDFN…PRLRSVDTFR (64 aa)). Phosphoserine is present on residues Ser-243 and Ser-245. The chain crosses the membrane as a helical span at residues 276 to 296 (GIALILMVFVNYGGGKYWYFK). Residue His-297 is part of the active site. The Lumenal, vesicle segment spans residues 297 to 302 (HASWNG). Residues 303-323 (LTVADLVFPWFVFIMGSSIFL) form a helical membrane-spanning segment. The Cytoplasmic portion of the chain corresponds to 324 to 345 (SMTSILQRGCSKFRLLGKIAWR). A helical transmembrane segment spans residues 346-366 (SFLLICIGIIIVNPNYCLGPL). Over 367–374 (SWDKVRIP) the chain is Lumenal, vesicle. The chain crosses the membrane as a helical span at residues 375-395 (GVLQRLGVTYFVVAVLELLFA). The Cytoplasmic portion of the chain corresponds to 396-420 (KPVPEHCASERSCLSLRDITSSWPQ). The chain crosses the membrane as a helical span at residues 421-441 (WLLILVLEGLWLGLTFLLPVP). Over 442 to 500 (GCPTGYLGPGGIGDFGKYPNCTGGAAGYIDRLLLGDDHLYQHPSSAVLYHTEVAYDPEG) the chain is Lumenal, vesicle. Residues 501-521 (ILGTINSIVMAFLGVQAGKIL) form a helical membrane-spanning segment. Topologically, residues 522–529 (LYYKARTK) are cytoplasmic. A helical membrane pass occupies residues 530-550 (DILIRFTAWCCILGLISVALT). Over 551-564 (KVSENEGFIPVNKN) the chain is Lumenal, vesicle. The chain crosses the membrane as a helical span at residues 565–585 (LWSLSYVTTLSSFAFFILLVL). At 586-592 (YPVVDVK) the chain is on the cytoplasmic side. A helical transmembrane segment spans residues 593–613 (GLWTGTPFFYPGMNSILVYVG). Topologically, residues 614–634 (HEVFENYFPFQWKLKDNQSHK) are lumenal, vesicle. Positions 624–635 (QWKLKDNQSHKE) are lysosomal targeting region. A helical transmembrane segment spans residues 635–655 (EHLTQNIVATALWVLIAYILY). The Cytoplasmic portion of the chain corresponds to 656–663 (RKKIFWKI).

Homooligomer. Homooligomerization is necessary for enzyme activity. In terms of processing, undergoes intralysosomal proteolytic cleavage; occurs within the end of the first and/or the beginning of the second luminal domain and is essential for the activation of the enzyme. Post-translationally, glycosylated. In terms of tissue distribution, widely expressed, with highest level in leukocytes, heart, liver, skeletal muscle, lung, placenta and liver.

It localises to the lysosome membrane. The catalysed reaction is alpha-D-glucosaminyl-[heparan sulfate](n) + acetyl-CoA = N-acetyl-alpha-D-glucosaminyl-[heparan sulfate](n) + CoA + H(+). In terms of biological role, lysosomal acetyltransferase that acetylates the non-reducing terminal alpha-glucosamine residue of intralysosomal heparin or heparan sulfate, converting it into a substrate for luminal alpha-N-acetyl glucosaminidase. The protein is Heparan-alpha-glucosaminide N-acetyltransferase (HGSNAT) of Homo sapiens (Human).